Here is a 407-residue protein sequence, read N- to C-terminus: Multifunctional CCA protein (407 aa).

Gly8 and Arg11 together coordinate ATP. Positions 8 and 11 each coordinate CTP. The Mg(2+) site is built by Asp21 and Asp23. ATP contacts are provided by Arg91, Arg137, and Arg140. Positions 91, 137, and 140 each coordinate CTP. Residues Thr228–Trp329 form the HD domain.

Belongs to the tRNA nucleotidyltransferase/poly(A) polymerase family. Bacterial CCA-adding enzyme type 1 subfamily. Monomer. Can also form homodimers and oligomers. It depends on Mg(2+) as a cofactor. Ni(2+) serves as cofactor.

The enzyme catalyses a tRNA precursor + 2 CTP + ATP = a tRNA with a 3' CCA end + 3 diphosphate. It carries out the reaction a tRNA with a 3' CCA end + 2 CTP + ATP = a tRNA with a 3' CCACCA end + 3 diphosphate. Its function is as follows. Catalyzes the addition and repair of the essential 3'-terminal CCA sequence in tRNAs without using a nucleic acid template. Adds these three nucleotides in the order of C, C, and A to the tRNA nucleotide-73, using CTP and ATP as substrates and producing inorganic pyrophosphate. tRNA 3'-terminal CCA addition is required both for tRNA processing and repair. Also involved in tRNA surveillance by mediating tandem CCA addition to generate a CCACCA at the 3' terminus of unstable tRNAs. While stable tRNAs receive only 3'-terminal CCA, unstable tRNAs are marked with CCACCA and rapidly degraded. This chain is Multifunctional CCA protein, found in Aliivibrio salmonicida (strain LFI1238) (Vibrio salmonicida (strain LFI1238)).